Reading from the N-terminus, the 61-residue chain is Photosystem II reaction center protein K (61 aa).

Residues 1-24 constitute a propeptide that is removed on maturation; that stretch reads MPNILSLTCICFNSVLYPTSFFFA. Residues 32–52 traverse the membrane as a helical segment; the sequence is IFNPIVDIMPVIPLFFFLLAF.

Belongs to the PsbK family. PSII is composed of 1 copy each of membrane proteins PsbA, PsbB, PsbC, PsbD, PsbE, PsbF, PsbH, PsbI, PsbJ, PsbK, PsbL, PsbM, PsbT, PsbX, PsbY, PsbZ, Psb30/Ycf12, at least 3 peripheral proteins of the oxygen-evolving complex and a large number of cofactors. It forms dimeric complexes. Detected in both etioplasts and green leaves; PSII is only assembled in green leaves.

It is found in the plastid. It localises to the chloroplast thylakoid membrane. Functionally, one of the components of the core complex of photosystem II (PSII). PSII is a light-driven water:plastoquinone oxidoreductase that uses light energy to abstract electrons from H(2)O, generating O(2) and a proton gradient subsequently used for ATP formation. It consists of a core antenna complex that captures photons, and an electron transfer chain that converts photonic excitation into a charge separation. The polypeptide is Photosystem II reaction center protein K (Hordeum vulgare (Barley)).